The chain runs to 354 residues: Elongation factor Ts (354 aa).

Residues 81-84 (TDFV) are involved in Mg(2+) ion dislocation from EF-Tu.

The protein belongs to the EF-Ts family.

Its subcellular location is the cytoplasm. In terms of biological role, associates with the EF-Tu.GDP complex and induces the exchange of GDP to GTP. It remains bound to the aminoacyl-tRNA.EF-Tu.GTP complex up to the GTP hydrolysis stage on the ribosome. This chain is Elongation factor Ts, found in Campylobacter fetus subsp. fetus (strain 82-40).